Consider the following 147-residue polypeptide: 3-hydroxyacyl-[acyl-carrier-protein] dehydratase FabZ (147 aa).

The active site involves His49.

The protein belongs to the thioester dehydratase family. FabZ subfamily.

The protein resides in the cytoplasm. It catalyses the reaction a (3R)-hydroxyacyl-[ACP] = a (2E)-enoyl-[ACP] + H2O. Its function is as follows. Involved in unsaturated fatty acids biosynthesis. Catalyzes the dehydration of short chain beta-hydroxyacyl-ACPs and long chain saturated and unsaturated beta-hydroxyacyl-ACPs. This chain is 3-hydroxyacyl-[acyl-carrier-protein] dehydratase FabZ, found in Alkaliphilus metalliredigens (strain QYMF).